Consider the following 194-residue polypeptide: Endo-1,4-beta-xylanase (194 aa).

At Gly-1 the chain carries N-acetylglycine. A GH11 domain is found at 1–191 (GTTPNSEGWH…SSGYARITVA (191 aa)). Glu-86 functions as the Nucleophile in the catalytic mechanism. A disulfide bond links Cys-110 and Cys-154. The active-site Proton donor is Glu-178.

This sequence belongs to the glycosyl hydrolase 11 (cellulase G) family.

The catalysed reaction is Endohydrolysis of (1-&gt;4)-beta-D-xylosidic linkages in xylans.. Its pathway is glycan degradation; xylan degradation. The protein is Endo-1,4-beta-xylanase of Byssochlamys spectabilis (Paecilomyces variotii).